The chain runs to 81 residues: Large ribosomal subunit protein uL23 (81 aa).

Belongs to the universal ribosomal protein uL23 family. As to quaternary structure, part of the 50S ribosomal subunit. Contacts protein L29.

Functionally, binds to 23S rRNA. One of the proteins that surrounds the polypeptide exit tunnel on the outside of the ribosome. The polypeptide is Large ribosomal subunit protein uL23 (Pyrobaculum aerophilum (strain ATCC 51768 / DSM 7523 / JCM 9630 / CIP 104966 / NBRC 100827 / IM2)).